A 388-amino-acid polypeptide reads, in one-letter code: Sulfate adenylyltransferase (388 aa).

The protein belongs to the sulfate adenylyltransferase family.

The enzyme catalyses sulfate + ATP + H(+) = adenosine 5'-phosphosulfate + diphosphate. Its pathway is sulfur metabolism; hydrogen sulfide biosynthesis; sulfite from sulfate: step 1/3. The sequence is that of Sulfate adenylyltransferase from Trichodesmium erythraeum (strain IMS101).